Here is a 442-residue protein sequence, read N- to C-terminus: C4-dicarboxylate transport protein (442 aa).

Transmembrane regions (helical) follow at residues 13-33 (VLYF…HFYP), 49-69 (GIKM…IAGM), 81-101 (LALL…LVVV), 149-169 (AFAK…GFAL), 193-213 (MIAI…AFTI), 227-247 (LMGS…GIIA), 312-332 (IYLT…MTLL), 336-356 (TLLA…GSGF), and 357-377 (IVLA…LAII).

This sequence belongs to the dicarboxylate/amino acid:cation symporter (DAACS) (TC 2.A.23) family.

Its subcellular location is the cell membrane. In terms of biological role, responsible for the transport of dicarboxylates such as succinate, fumarate, and malate across the membrane. In Polynucleobacter asymbioticus (strain DSM 18221 / CIP 109841 / QLW-P1DMWA-1) (Polynucleobacter necessarius subsp. asymbioticus), this protein is C4-dicarboxylate transport protein.